A 32-amino-acid chain; its full sequence is Yop proteins translocation protein A (32 aa).

The protein is Yop proteins translocation protein A (yscA) of Yersinia pestis.